We begin with the raw amino-acid sequence, 189 residues long: GTPase KRas (189 aa).

Residue methionine 1 is modified to N-acetylmethionine; in GTPase KRas; alternate. An N-acetylthreonine; in GTPase KRas, N-terminally processed modification is found at threonine 2. Residues 10–18, 29–35, and 59–60 contribute to the GTP site; these read GAGGVGKSA, VDEYDPT, and AG. Positions 32–40 match the Effector region motif; it reads YDPTIEDSY. A glycan ((Microbial infection) O-linked (Glc) threonine; by P.sordellii toxin TcsL) is linked at threonine 35. Lysine 104 is subject to N6-acetyllysine. GTP is bound at residue 116–119; it reads NKCD. Residues 166 to 185 are hypervariable region; it reads YRLKKISKEEKTPGCVKIKK. Lysine 170 participates in a covalent cross-link: Glycyl lysine isopeptide (Lys-Gly) (interchain with G-Cter in ubiquitin). Cysteine 180 is lipidated: S-palmitoyl cysteine. N6-palmitoyl lysine attachment occurs at residues lysine 182, lysine 184, and lysine 185. At cysteine 186 the chain carries Cysteine methyl ester. The S-farnesyl cysteine moiety is linked to residue cysteine 186. A propeptide spans 187–189 (removed in mature form); the sequence is IIM.

This sequence belongs to the small GTPase superfamily. Ras family. As to quaternary structure, interacts with PHLPP. Interacts (active GTP-bound form preferentially) with RGS14. Interacts (when farnesylated) with PDE6D; this promotes dissociation from the cell membrane. Interacts with SOS1. Interacts (when farnesylated) with GPR31. Interacts with RAP1GDS1. Interacts (active GTP-bound form) with both SHOC2 and PP1c (all isoforms) to form a tertiary complex; SHOC2 and PP1c preferably bind M-Ras/MRAS, but they also bind K-Ras/KRAS, N-Ras/NRAS and H-Ras/HRAS. Interacts (GTP-bound form) with MAPKAP1/SIN1; inhibiting K-Ras/KRAS activity. Interacts with GPR31; in a farnelysation-dependent manner. Acetylation at Lys-104 prevents interaction with guanine nucleotide exchange factors (GEFs). In terms of processing, palmitoylated at Lys-182, Lys-184 and Lys-185. Palmitoylation on lysine residues is promoted by palmitoylation at Cys-180. Lysine-depalmitoylation by SIRT2 promotes its localization to endomembranes in endocytic pathways. Post-translationally, ubiquitinated by the BCR(LZTR1) E3 ubiquitin ligase complex at Lys-170 in a non-degradative manner, leading to inhibit Ras signaling by decreasing Ras association with membranes. (Microbial infection) Glucosylated at Thr-35 by P.sordellii toxin TcsL.

It is found in the cell membrane. The protein localises to the endomembrane system. Its subcellular location is the cytoplasm. The protein resides in the cytosol. It carries out the reaction GTP + H2O = GDP + phosphate + H(+). Its activity is regulated as follows. Alternates between an inactive form bound to GDP and an active form bound to GTP. Activated by a guanine nucleotide-exchange factor (GEF) and inactivated by a GTPase-activating protein (GAP). Interaction with SOS1 promotes exchange of bound GDP to GTP. Its function is as follows. Ras proteins bind GDP/GTP and possess intrinsic GTPase activity. Plays an important role in the regulation of cell proliferation. Plays a role in promoting oncogenic events by inducing transcriptional silencing of tumor suppressor genes (TSGs) in colorectal cancer (CRC) cells in a ZNF304-dependent manner. This is GTPase KRas (KRAS) from Homo sapiens (Human).